The following is a 1086-amino-acid chain: Isoleucine--tRNA ligase (1086 aa).

The 'HIGH' region motif lies at 53–63; that stretch reads PFANGLPHYGH. Positions 624–628 match the 'KMSKS' region motif; it reads KLSKR. ATP is bound at residue K627.

It belongs to the class-I aminoacyl-tRNA synthetase family. IleS type 2 subfamily. Monomer. Zn(2+) is required as a cofactor.

The protein resides in the cytoplasm. It catalyses the reaction tRNA(Ile) + L-isoleucine + ATP = L-isoleucyl-tRNA(Ile) + AMP + diphosphate. Its function is as follows. Catalyzes the attachment of isoleucine to tRNA(Ile). As IleRS can inadvertently accommodate and process structurally similar amino acids such as valine, to avoid such errors it has two additional distinct tRNA(Ile)-dependent editing activities. One activity is designated as 'pretransfer' editing and involves the hydrolysis of activated Val-AMP. The other activity is designated 'posttransfer' editing and involves deacylation of mischarged Val-tRNA(Ile). This is Isoleucine--tRNA ligase from Rickettsia typhi (strain ATCC VR-144 / Wilmington).